The chain runs to 589 residues: Sphingosine-1-phosphate lyase (589 aa).

Over Met1–Asp58 the chain is Lumenal. Asn6 is a glycosylation site (N-linked (GlcNAc...) asparagine). Residues Tyr59–Leu76 traverse the membrane as a helical segment. The Cytoplasmic portion of the chain corresponds to Lys77–Lys589. N6-(pyridoxal phosphate)lysine is present on Lys380.

It belongs to the group II decarboxylase family. Sphingosine-1-phosphate lyase subfamily. As to quaternary structure, homodimer. The cofactor is pyridoxal 5'-phosphate. In terms of processing, glycosylated.

Its subcellular location is the endoplasmic reticulum membrane. The enzyme catalyses sphinganine 1-phosphate = hexadecanal + phosphoethanolamine. It carries out the reaction (4R)-hydroxysphinganine 1-phosphate = (2R)-hydroxyhexadecanal + phosphoethanolamine. The protein operates within lipid metabolism; sphingolipid metabolism. Sphingosine-1-phosphate lyase that cleaves phosphorylated sphingoid bases (PSBs), such as sphingosine-1-phosphate, into fatty aldehydes and phosphoethanolamine. Prefers C-16 dihydrosphingosine-l-phosphate (DHS-P) as a substrate. Regulates intracellular levels of sphingolipid long-chain base phosphates (LCBPs). Plays a role in the regulation of global responses to nutrient deprivation in yeast. The protein is Sphingosine-1-phosphate lyase of Saccharomyces cerevisiae (strain ATCC 204508 / S288c) (Baker's yeast).